Here is a 539-residue protein sequence, read N- to C-terminus: Chaperonin GroEL 1 (539 aa).

ATP is bound by residues 29–32, 86–90, Gly413, 478–480, and Asp494; these read TLGP, DGTTT, and NAA. The interval 520–539 is disordered; that stretch reads IVDKPAEPEDDGHGHHGHAH. Residues 523–533 show a composition bias toward basic and acidic residues; the sequence is KPAEPEDDGHG.

This sequence belongs to the chaperonin (HSP60) family. In terms of assembly, forms a cylinder of 14 subunits composed of two heptameric rings stacked back-to-back. Interacts with the co-chaperonin GroES.

The protein resides in the cytoplasm. The enzyme catalyses ATP + H2O + a folded polypeptide = ADP + phosphate + an unfolded polypeptide.. Its function is as follows. Together with its co-chaperonin GroES, plays an essential role in assisting protein folding. The GroEL-GroES system forms a nano-cage that allows encapsulation of the non-native substrate proteins and provides a physical environment optimized to promote and accelerate protein folding. The chain is Chaperonin GroEL 1 from Mycobacterium ulcerans (strain Agy99).